Here is a 146-residue protein sequence, read N- to C-terminus: Large ribosomal subunit protein uL15 (146 aa).

Positions 1–10 are enriched in basic and acidic residues; sequence MTIKLHDLKP. The tract at residues 1-52 is disordered; the sequence is MTIKLHDLKPARGSKTPRTRVGRGEGSKGKTAGRGTKGTKARKNVPVTFEGG.

The protein belongs to the universal ribosomal protein uL15 family. As to quaternary structure, part of the 50S ribosomal subunit.

Binds to the 23S rRNA. This chain is Large ribosomal subunit protein uL15, found in Mycolicibacterium paratuberculosis (strain ATCC BAA-968 / K-10) (Mycobacterium paratuberculosis).